Here is a 676-residue protein sequence, read N- to C-terminus: XK-related protein 5 (676 aa).

Transmembrane regions (helical) follow at residues 37-57 (WLALSVLLPGFLVQALSFLWF), 114-134 (LLEALLQTGPHLLLQAYVFLA), 140-160 (IVPGISALLSWSSLSWALVSY), 206-226 (VWVLVVGGAHWLVMTFWLVAQ), 239-259 (LFNLLVGAVFILCYINFWDSP), 266-286 (SFYLVMLLENSILLLLATDFL), and 294-314 (LWTVVGVLSGFLIGCASLVIY). Disordered regions lie at residues 336–362 (PIEDNKPESEPPPRAVDPTGEMPDSSS), 372–391 (TSLDKAPSPEQNTAEVGLGE), 495–538 (LEDN…KEGQ), and 598–661 (PIPG…IQRD). Polar residues predominate over residues 498–509 (NATTQKPPATQE).

It belongs to the XK family.

It localises to the cell membrane. The chain is XK-related protein 5 from Mus musculus (Mouse).